Reading from the N-terminus, the 86-residue chain is Small ribosomal subunit protein bS18 (86 aa).

Belongs to the bacterial ribosomal protein bS18 family. Part of the 30S ribosomal subunit. Forms a tight heterodimer with protein bS6.

Functionally, binds as a heterodimer with protein bS6 to the central domain of the 16S rRNA, where it helps stabilize the platform of the 30S subunit. This Heliobacterium modesticaldum (strain ATCC 51547 / Ice1) protein is Small ribosomal subunit protein bS18.